Reading from the N-terminus, the 140-residue chain is Resuscitation-promoting factor RpfC (140 aa).

Positions 1–31 (MTRIAKPLIKSAMAAGLVTASMSLSTAVAHA) are cleaved as a signal peptide.

It belongs to the transglycosylase family. Rpf subfamily.

The protein resides in the secreted. Functionally, factor that stimulates resuscitation of dormant cells. Has peptidoglycan (PG) hydrolytic activity. This chain is Resuscitation-promoting factor RpfC (rpfC), found in Mycobacterium tuberculosis (strain ATCC 35801 / TMC 107 / Erdman).